A 416-amino-acid polypeptide reads, in one-letter code: S-adenosylmethionine synthase (416 aa).

His14 contributes to the ATP binding site. Asp16 is a Mg(2+) binding site. Glu42 is a binding site for K(+). 2 residues coordinate L-methionine: Glu55 and Gln98. The segment at 98 to 108 (QSADINQGVDR) is flexible loop. ATP contacts are provided by residues 164 to 166 (DAK), 240 to 241 (KF), Asp249, 255 to 256 (RK), Ala272, and Lys276. Asp249 contributes to the L-methionine binding site. Lys280 lines the L-methionine pocket.

This sequence belongs to the AdoMet synthase family. In terms of assembly, homotetramer; dimer of dimers. Mg(2+) is required as a cofactor. K(+) serves as cofactor.

It localises to the cytoplasm. The enzyme catalyses L-methionine + ATP + H2O = S-adenosyl-L-methionine + phosphate + diphosphate. The protein operates within amino-acid biosynthesis; S-adenosyl-L-methionine biosynthesis; S-adenosyl-L-methionine from L-methionine: step 1/1. Catalyzes the formation of S-adenosylmethionine (AdoMet) from methionine and ATP. The overall synthetic reaction is composed of two sequential steps, AdoMet formation and the subsequent tripolyphosphate hydrolysis which occurs prior to release of AdoMet from the enzyme. In Flavobacterium johnsoniae (strain ATCC 17061 / DSM 2064 / JCM 8514 / BCRC 14874 / CCUG 350202 / NBRC 14942 / NCIMB 11054 / UW101) (Cytophaga johnsonae), this protein is S-adenosylmethionine synthase.